The sequence spans 124 residues: Ribonuclease pancreatic (124 aa).

The span at 1 to 13 (KESAAAKFERQHM) shows a compositional bias: basic and acidic residues. Positions 1–25 (KESAAAKFERQHMDPSPSSASSSNY) are disordered. The substrate site is built by K7 and R10. H12 acts as the Proton acceptor in catalysis. Intrachain disulfides connect C26–C84, C40–C95, C58–C110, and C65–C72. An N-linked (GlcNAc...) asparagine; partial glycan is attached at N34. Substrate contacts are provided by residues 41-45 (KPVNT), K66, and R85. H119 (proton donor) is an active-site residue.

It belongs to the pancreatic ribonuclease family. Monomer. Interacts with and forms tight 1:1 complexes with RNH1. Dimerization of two such complexes may occur. Interaction with RNH1 inhibits this protein. Pancreas.

The protein resides in the secreted. The enzyme catalyses an [RNA] containing cytidine + H2O = an [RNA]-3'-cytidine-3'-phosphate + a 5'-hydroxy-ribonucleotide-3'-[RNA].. It carries out the reaction an [RNA] containing uridine + H2O = an [RNA]-3'-uridine-3'-phosphate + a 5'-hydroxy-ribonucleotide-3'-[RNA].. Endonuclease that catalyzes the cleavage of RNA on the 3' side of pyrimidine nucleotides. Acts on single-stranded and double-stranded RNA. The chain is Ribonuclease pancreatic (RNASE1) from Capreolus capreolus (European roe deer).